Consider the following 409-residue polypeptide: Arginine deiminase (409 aa).

Cysteine 399 functions as the Amidino-cysteine intermediate in the catalytic mechanism.

Belongs to the arginine deiminase family.

It is found in the cytoplasm. It carries out the reaction L-arginine + H2O = L-citrulline + NH4(+). The protein operates within amino-acid degradation; L-arginine degradation via ADI pathway; carbamoyl phosphate from L-arginine: step 1/2. In Streptococcus pneumoniae (strain P1031), this protein is Arginine deiminase.